We begin with the raw amino-acid sequence, 615 residues long: Sodium-coupled neutral amino acid transporter 9 homolog (615 aa).

Residues 1–165 (MPPFFAEFTE…LKDVSGKQGS (165 aa)) lie on the Cytoplasmic side of the membrane. A disordered region spans residues 41-65 (VDDNDTDPLLDDEPPRRLPPAGGVP). Acidic residues predominate over residues 42 to 52 (DDNDTDPLLDD). Residues 166 to 186 (IVTIFSIWNTMMGTSLLAMPW) traverse the membrane as a helical segment. The tract at residues 175–180 (TMMGTS) is important for arginine binding and amino acid transport. Residues 187–192 (ALQQAG) lie on the Lumenal side of the membrane. The chain crosses the membrane as a helical span at residues 193-213 (LVLGIIIMLSMAAICFYTAYI). Residues 214 to 246 (VIESPKRLQDLSVDPLLAEFSDVCKSLFGRIGE) lie on the Cytoplasmic side of the membrane. A helical membrane pass occupies residues 247 to 273 (YCAVVFSVCVLIGGVIVYWVLMSNFLY). Residues 274–341 (YTGAVVYESM…TGDDSWSFDK (68 aa)) are Lumenal-facing. N286 and N295 each carry an N-linked (GlcNAc...) asparagine glycan. C304 and C478 are disulfide-bonded. A helical transmembrane segment spans residues 342–358 (FWTLRGTVPIYLAFALF). Residues 359–367 (PLMNFKSPT) lie on the Cytoplasmic side of the membrane. The chain crosses the membrane as a helical span at residues 368–392 (FFTKFNVLGTISVMYLLMFVFSKLL). The Lumenal portion of the chain corresponds to 393-413 (ECGVNMDFSNPKSIHYVQLAN). A helical membrane pass occupies residues 414-434 (MHFPALSGTLTLSYFIHNAVL). Over 435 to 451 (TILRNQKHPENNARDLS) the chain is Cytoplasmic. A helical transmembrane segment spans residues 452 to 472 (IGYCLVAFCYVFIGFTFFAAF). The Lumenal portion of the chain corresponds to 473-491 (PVQRSCISDNFLNNFGAGD). Residues 492–512 (VLSSTARLFLLFQMITVLPLL) traverse the membrane as a helical segment. Over 513–533 (MFLVRSQLFYAIFGQTWPGAI) the chain is Cytoplasmic. The chain crosses the membrane as a helical span at residues 534–554 (RVIILNVLLIAVAVGFATFYP). Residues 555 to 561 (NVGSILR) lie on the Lumenal side of the membrane. A helical transmembrane segment spans residues 562–582 (YVGSISGLVYVFALPAMVYIK). The Cytoplasmic segment spans residues 583–594 (QSEAAGTLTPMK). Residues 595–615 (KYAHYGIIVIGVANLIAQFVI) form a helical membrane-spanning segment.

It belongs to the amino acid/polyamine transporter 2 family. SLC38A9 subfamily.

The protein resides in the lysosome membrane. The protein localises to the late endosome membrane. Amino acid transport is sodium-dependent. Transport of leucine, tyrosine and phenylalanine is increased by arginine binding. In terms of biological role, lysosomal amino acid transporter involved in the activation of mTORC1 in response to amino acid levels. Probably acts as an amino acid sensor of the Rag GTPases and Ragulator complexes, 2 complexes involved in amino acid sensing and activation of mTORC1, a signaling complex promoting cell growth in response to growth factors, energy levels, and amino acids. The sequence is that of Sodium-coupled neutral amino acid transporter 9 homolog from Caenorhabditis elegans.